Consider the following 431-residue polypeptide: Serine hydroxymethyltransferase 2 (431 aa).

(6S)-5,6,7,8-tetrahydrofolate-binding positions include leucine 131 and 135-137; that span reads GHL. The residue at position 240 (lysine 240) is an N6-(pyridoxal phosphate)lysine. Position 256 (glutamate 256) interacts with (6S)-5,6,7,8-tetrahydrofolate.

Belongs to the SHMT family. In terms of assembly, homodimer. The cofactor is pyridoxal 5'-phosphate.

It is found in the cytoplasm. It carries out the reaction (6R)-5,10-methylene-5,6,7,8-tetrahydrofolate + glycine + H2O = (6S)-5,6,7,8-tetrahydrofolate + L-serine. The protein operates within one-carbon metabolism; tetrahydrofolate interconversion. It participates in amino-acid biosynthesis; glycine biosynthesis; glycine from L-serine: step 1/1. Functionally, catalyzes the reversible interconversion of serine and glycine with tetrahydrofolate (THF) serving as the one-carbon carrier. This reaction serves as the major source of one-carbon groups required for the biosynthesis of purines, thymidylate, methionine, and other important biomolecules. Also exhibits THF-independent aldolase activity toward beta-hydroxyamino acids, producing glycine and aldehydes, via a retro-aldol mechanism. This chain is Serine hydroxymethyltransferase 2, found in Vibrio vulnificus (strain YJ016).